A 231-amino-acid polypeptide reads, in one-letter code: Ion-translocating oxidoreductase complex subunit E (231 aa).

Helical transmembrane passes span 18 to 38 (ALVQ…ATNA), 39 to 59 (LGLG…ISTL), 63 to 83 (TPAE…VSAV), 86 to 106 (LINA…PLIV), 125 to 145 (ALSA…MFVL), and 182 to 202 (PFLL…MLAG).

This sequence belongs to the NqrDE/RnfAE family. In terms of assembly, the complex is composed of six subunits: RsxA, RsxB, RsxC, RsxD, RsxE and RsxG.

Its subcellular location is the cell inner membrane. Its function is as follows. Part of a membrane-bound complex that couples electron transfer with translocation of ions across the membrane. Required to maintain the reduced state of SoxR. The sequence is that of Ion-translocating oxidoreductase complex subunit E from Escherichia coli (strain SE11).